Consider the following 409-residue polypeptide: uncharacterized protein (409 aa).

Disordered stretches follow at residues 12 to 32 (ENTENQKIEATEETAPTLHCP), 133 to 160 (EVSTQKSWSSEKNWSGLSQGPGTASREQ), and 194 to 213 (TVSSKAGRNPSGSPEQGLST). Residues 134–160 (VSTQKSWSSEKNWSGLSQGPGTASREQ) show a composition bias toward polar residues.

This is an uncharacterized protein from Mus musculus (Mouse).